Consider the following 212-residue polypeptide: Protein G1-like7 (212 aa).

Low complexity predominate over residues 1–22 (MDPSGPGPSSAAAGGAPAVAAA). Disordered regions lie at residues 1-34 (MDPS…RYES) and 148-212 (KARG…PSAS). Residues 31–158 (RYESQKRRDW…ARGIPYEKKK (128 aa)) enclose the ALOG domain. Residues 156 to 160 (KKKRK) carry the Nuclear localization signal motif. The segment covering 173 to 182 (SGSSSAAAAA) has biased composition (low complexity). The span at 183 to 194 (AGGGDTGSGGGA) shows a compositional bias: gly residues.

It belongs to the plant homeotic and developmental regulators ALOG protein family.

It is found in the nucleus. Probable transcription regulator that acts as a developmental regulator by promoting cell growth in response to light. The chain is Protein G1-like7 from Oryza sativa subsp. indica (Rice).